The chain runs to 444 residues: MRGVIPNYHHSYTLFFFVILVLFPHVFSTNTLSPNEALTISSNKTLVSPGDVFELGFFKTTTRNSPDGTDRWYLGIWYKTTSGHRTYVWVANRDNALHNSMGTLKISHASLVLLDHSNTPVWSTNFTGVAHLPVTAELLANGNFVLRDSKTNDLDRFMWQSFDYPVDTLLPEMKLGRNLIGSENEKILTSWKSPTDPSSGDFSFILETEGFLHEFYLLKNEFKVYRTGPWNGVRFNGIPKMQNWSYIDNSFIDNNEEVAYSFQVNNNHNIHTRFRMSSTGYLQVITWTKTVPQRNMFWSFPEDTCDLYKVCGPYAYCDMHTSPTCNCIKGFVPKNAGRWDLRDMSGGCVRSSKLSCGEGDGFLRMSQMKLPETSEAVVDKRIGLKECREKCVRDCNCTGYANMDIMNGGSGCVMWTGELDDMRKYNAGGQDLYVKVAAASLVPS.

The first 28 residues, 1 to 28 (MRGVIPNYHHSYTLFFFVILVLFPHVFS), serve as a signal peptide directing secretion. The Bulb-type lectin domain maps to 31-159 (TLSPNEALTI…KTNDLDRFMW (129 aa)). Residues N43, N125, N243, and N396 are each glycosylated (N-linked (GlcNAc...) asparagine). One can recognise a PAN domain in the interval 356–437 (CGEGDGFLRM…GGQDLYVKVA (82 aa)). Intrachain disulfides connect C387–C412 and C395–C397.

In terms of tissue distribution, stigma.

In terms of biological role, involved in sporophytic self-incompatibility system (the inability of flowering plants to achieve self-fertilization). The chain is S-locus-specific glycoprotein (SLSG) from Brassica oleracea var. alboglabra (Chinese kale).